A 246-amino-acid polypeptide reads, in one-letter code: DNA repair protein RecO (246 aa).

Belongs to the RecO family.

Functionally, involved in DNA repair and RecF pathway recombination. The chain is DNA repair protein RecO from Pelobacter propionicus (strain DSM 2379 / NBRC 103807 / OttBd1).